Consider the following 339-residue polypeptide: Anthranilate phosphoribosyltransferase (339 aa).

Residues G79, 82-83 (GD), S87, 89-92 (NIST), 107-115 (KHGNRSISS), and S119 each bind 5-phospho-alpha-D-ribose 1-diphosphate. G79 provides a ligand contact to anthranilate. Residue S91 coordinates Mg(2+). N110 provides a ligand contact to anthranilate. R165 is a binding site for anthranilate. Residues D224 and E225 each contribute to the Mg(2+) site.

Belongs to the anthranilate phosphoribosyltransferase family. Homodimer. The cofactor is Mg(2+).

The catalysed reaction is N-(5-phospho-beta-D-ribosyl)anthranilate + diphosphate = 5-phospho-alpha-D-ribose 1-diphosphate + anthranilate. It functions in the pathway amino-acid biosynthesis; L-tryptophan biosynthesis; L-tryptophan from chorismate: step 2/5. In terms of biological role, catalyzes the transfer of the phosphoribosyl group of 5-phosphorylribose-1-pyrophosphate (PRPP) to anthranilate to yield N-(5'-phosphoribosyl)-anthranilate (PRA). The chain is Anthranilate phosphoribosyltransferase from Listeria monocytogenes serovar 1/2a (strain ATCC BAA-679 / EGD-e).